A 239-amino-acid polypeptide reads, in one-letter code: Ribonuclease P protein component 3 (239 aa).

The protein belongs to the eukaryotic/archaeal RNase P protein component 3 family. In terms of assembly, consists of a catalytic RNA component and at least 4-5 protein subunits.

It localises to the cytoplasm. It carries out the reaction Endonucleolytic cleavage of RNA, removing 5'-extranucleotides from tRNA precursor.. In terms of biological role, part of ribonuclease P, a protein complex that generates mature tRNA molecules by cleaving their 5'-ends. The sequence is that of Ribonuclease P protein component 3 from Methanosarcina mazei (strain ATCC BAA-159 / DSM 3647 / Goe1 / Go1 / JCM 11833 / OCM 88) (Methanosarcina frisia).